Here is a 309-residue protein sequence, read N- to C-terminus: MSLIRRSTSHQLNALDNSLQSYLGSQEFKEDMREQAGFGRWKRVKASAGEKPIVLVPDNSYSALKALMKSEYEKGLIPSKGYMHLKWCLVFIVAHVPKETMGEVCIELRDPGISTADPLPGCQVVCALSDLPRAVMLVPDYDMPLGKSKLRLGNQEMRRMFFLHTKVSGFTGQGVAISLFPVWDCDFRGTCNNYVKVPAVSVGIDRTERTSLLNCVKQLKQYAENALLTMPQSISGGTSFARPSHLSLNESKTLPSTSTTEAEGSERRIHIGAPSNEDLYEVKSAGTTGGPVSLVNGVSVGASTQSAFF.

The tract at residues histidine 245–alanine 273 is disordered. Residues leucine 246–alanine 262 are compositionally biased toward polar residues.

Its subcellular location is the host cell junction. The protein localises to the host plasmodesma. In terms of biological role, transports viral genome to neighboring plant cells directly through plasmosdesmata, without any budding. The movement protein allows efficient cell to cell propagation, by bypassing the host cell wall barrier. Acts by forming a tubular structure at the host plasmodesmata, enlarging it enough to allow free passage of virion capsids. The chain is Movement protein from Solanum lycopersicum (Tomato).